Here is a 267-residue protein sequence, read N- to C-terminus: Diacetylchitobiose deacetylase (267 aa).

It belongs to the PIGL family. As to quaternary structure, homohexamer.

Its subcellular location is the cytoplasm. It carries out the reaction N,N'-diacetylchitobiose + H2O = beta-D-glucosaminyl-(1-&gt;4)-N-acetyl-D-glucosamine + acetate. It functions in the pathway glycan degradation; chitin degradation. Deacylates the non-reducing end of diacetylchitobiose (GlcNAc2). Can also use N-acetylglucosamine (GlcNAc) and N-acetylchitotriose (GlcNAc3). Probably involved in chitin degradation. This is Diacetylchitobiose deacetylase (dac) from Thermococcus kodakarensis (strain ATCC BAA-918 / JCM 12380 / KOD1) (Pyrococcus kodakaraensis (strain KOD1)).